We begin with the raw amino-acid sequence, 564 residues long: CTP synthase (564 aa).

The tract at residues 1–265 is amidoligase domain; sequence MTKFVFVTGG…DEIVCHRLGI (265 aa). Residue S13 participates in CTP binding. S13 lines the UTP pocket. Residues 14–19 and D71 each bind ATP; that span reads SLGKGI. Mg(2+) is bound by residues D71 and E139. Residues 146-148, 186-191, and K222 each bind CTP; these read DIE and KTKPTQ. UTP is bound by residues 186–191 and K222; that span reads KTKPTQ. Residues 290–543 form the Glutamine amidotransferase type-1 domain; the sequence is SIALVGKYVD…VRAAISFADK (254 aa). G351 is a binding site for L-glutamine. Residue C378 is the Nucleophile; for glutamine hydrolysis of the active site. L-glutamine is bound by residues 379 to 382, E402, and R469; that span reads LGMQ. Catalysis depends on residues H516 and E518.

Belongs to the CTP synthase family. In terms of assembly, homotetramer.

The enzyme catalyses UTP + L-glutamine + ATP + H2O = CTP + L-glutamate + ADP + phosphate + 2 H(+). The catalysed reaction is L-glutamine + H2O = L-glutamate + NH4(+). It carries out the reaction UTP + NH4(+) + ATP = CTP + ADP + phosphate + 2 H(+). The protein operates within pyrimidine metabolism; CTP biosynthesis via de novo pathway; CTP from UDP: step 2/2. Its activity is regulated as follows. Allosterically activated by GTP, when glutamine is the substrate; GTP has no effect on the reaction when ammonia is the substrate. The allosteric effector GTP functions by stabilizing the protein conformation that binds the tetrahedral intermediate(s) formed during glutamine hydrolysis. Inhibited by the product CTP, via allosteric rather than competitive inhibition. Functionally, catalyzes the ATP-dependent amination of UTP to CTP with either L-glutamine or ammonia as the source of nitrogen. Regulates intracellular CTP levels through interactions with the four ribonucleotide triphosphates. In Nitrosomonas eutropha (strain DSM 101675 / C91 / Nm57), this protein is CTP synthase.